The sequence spans 403 residues: D-galactonate dehydratase family member ManD (403 aa).

Substrate-binding residues include N37 and H122. Residue Y159 is the Proton donor/acceptor of the active site. Position 211 (D211) interacts with Mg(2+). H213 acts as the Proton donor/acceptor in catalysis. Residues E237 and E263 each contribute to the Mg(2+) site. 5 residues coordinate substrate: E263, R284, H313, D317, and E340.

The protein belongs to the mandelate racemase/muconate lactonizing enzyme family. GalD subfamily. The cofactor is Mg(2+).

It catalyses the reaction D-mannonate = 2-dehydro-3-deoxy-D-gluconate + H2O. The catalysed reaction is D-gluconate = 2-dehydro-3-deoxy-D-gluconate + H2O. In terms of biological role, has low dehydratase activity with D-mannonate and D-gluconate, suggesting that these are not physiological substrates and that it has no significant role in the in vivo degradation of these compounds. Has no detectable activity with a panel of 70 other acid sugars (in vitro). The sequence is that of D-galactonate dehydratase family member ManD (manD) from Chromohalobacter salexigens (strain ATCC BAA-138 / DSM 3043 / CIP 106854 / NCIMB 13768 / 1H11).